We begin with the raw amino-acid sequence, 384 residues long: Tryptophan--tRNA ligase (384 aa).

A 'HIGH' region motif is present at residues 81 to 89; sequence PSGPMHIGH. The short motif at 252-256 is the 'KMSKS' region element; sequence KMSAS.

Belongs to the class-I aminoacyl-tRNA synthetase family.

The protein resides in the cytoplasm. It catalyses the reaction tRNA(Trp) + L-tryptophan + ATP = L-tryptophyl-tRNA(Trp) + AMP + diphosphate + H(+). This chain is Tryptophan--tRNA ligase, found in Thermococcus kodakarensis (strain ATCC BAA-918 / JCM 12380 / KOD1) (Pyrococcus kodakaraensis (strain KOD1)).